We begin with the raw amino-acid sequence, 147 residues long: Basic phospholipase A2 beta-bungarotoxin A4 chain (147 aa).

The signal sequence occupies residues 1–19; sequence MNPAHLLVLSAVCVSLLGA. Positions 20-27 are excised as a propeptide; it reads ANIPPHPL. 6 disulfide bridges follow: Cys-54-Cys-146, Cys-56-Cys-72, Cys-71-Cys-127, Cys-78-Cys-120, Cys-88-Cys-113, and Cys-106-Cys-118. Ca(2+) is bound by residues Tyr-55, Gly-57, and Gly-59. His-75 is a catalytic residue. Asp-76 is a binding site for Ca(2+). The active site involves Asp-121.

Belongs to the phospholipase A2 family. Group I subfamily. D49 sub-subfamily. In terms of assembly, heterodimer; disulfide-linked. The A chain has phospholipase A2 activity and the B chain shows homology with the basic protease inhibitors. Ca(2+) is required as a cofactor. Expressed by the venom gland.

It localises to the secreted. The enzyme catalyses a 1,2-diacyl-sn-glycero-3-phosphocholine + H2O = a 1-acyl-sn-glycero-3-phosphocholine + a fatty acid + H(+). In terms of biological role, snake venom phospholipase A2 (PLA2) that shows presynaptic neurotoxicity. The A chain has phospholipase activity. PLA2 catalyzes the calcium-dependent hydrolysis of the 2-acyl groups in 3-sn-phosphoglycerides. The polypeptide is Basic phospholipase A2 beta-bungarotoxin A4 chain (Bungarus candidus (Malayan krait)).